A 665-amino-acid polypeptide reads, in one-letter code: FAD-dependent oxidoreductase domain-containing protein 2 (665 aa).

The N-terminal stretch at 1–17 is a signal peptide; the sequence is MGPSGLLVALALHLAVC. An N-linked (GlcNAc...) asparagine glycan is attached at Asn-136. The disordered stretch occupies residues 642–665; that stretch reads RWLGDHSTAPEPLTQSLDSNKEEL. Positions 662–665 match the Prevents secretion from ER motif; it reads KEEL.

This sequence belongs to the FOXRED2 family. As to quaternary structure, interacts with SEL1L. May interact with OS9 and DNAJC10. Interacts with TXNDC16. The cofactor is FAD. N-glycosylated.

Its subcellular location is the endoplasmic reticulum lumen. Probable flavoprotein which may function in endoplasmic reticulum associated degradation (ERAD). May bind non-native proteins in the endoplasmic reticulum and target them to the ubiquitination machinery for subsequent degradation. In Mus musculus (Mouse), this protein is FAD-dependent oxidoreductase domain-containing protein 2.